We begin with the raw amino-acid sequence, 128 residues long: Ribonuclease P protein component (128 aa).

This sequence belongs to the RnpA family. As to quaternary structure, consists of a catalytic RNA component (M1 or rnpB) and a protein subunit.

The enzyme catalyses Endonucleolytic cleavage of RNA, removing 5'-extranucleotides from tRNA precursor.. Its function is as follows. RNaseP catalyzes the removal of the 5'-leader sequence from pre-tRNA to produce the mature 5'-terminus. It can also cleave other RNA substrates such as 4.5S RNA. The protein component plays an auxiliary but essential role in vivo by binding to the 5'-leader sequence and broadening the substrate specificity of the ribozyme. The polypeptide is Ribonuclease P protein component (Synechococcus sp. (strain CC9902)).